The following is a 170-amino-acid chain: Lipoprotein signal peptidase (170 aa).

4 consecutive transmembrane segments (helical) span residues 11 to 31 (LGWL…KAHF), 41 to 61 (IVVI…AAFS), 69 to 89 (WQRW…VVWL), and 95 to 115 (DDTW…GNLY). Catalysis depends on residues D125 and D144. Residues 136 to 156 (YFPAFNFADSAITVGAIMLAL) form a helical membrane-spanning segment.

This sequence belongs to the peptidase A8 family.

Its subcellular location is the cell inner membrane. It carries out the reaction Release of signal peptides from bacterial membrane prolipoproteins. Hydrolyzes -Xaa-Yaa-Zaa-|-(S,diacylglyceryl)Cys-, in which Xaa is hydrophobic (preferably Leu), and Yaa (Ala or Ser) and Zaa (Gly or Ala) have small, neutral side chains.. Its pathway is protein modification; lipoprotein biosynthesis (signal peptide cleavage). In terms of biological role, this protein specifically catalyzes the removal of signal peptides from prolipoproteins. This chain is Lipoprotein signal peptidase, found in Pseudomonas fluorescens.